The primary structure comprises 511 residues: 2,3-bisphosphoglycerate-independent phosphoglycerate mutase (511 aa).

Position 12 (Asp12) interacts with Mn(2+). Tyr36 bears the Phosphotyrosine mark. Ser62 lines the Mn(2+) pocket. Ser62 acts as the Phosphoserine intermediate in catalysis. Substrate-binding positions include His123, 153–154, Arg185, Arg191, 261–264, and Lys336; these read RD and RPDR. Mn(2+)-binding residues include Asp403, His407, Asp444, His445, and His462.

The protein belongs to the BPG-independent phosphoglycerate mutase family. Monomer. Requires Mn(2+) as cofactor.

The enzyme catalyses (2R)-2-phosphoglycerate = (2R)-3-phosphoglycerate. It functions in the pathway carbohydrate degradation; glycolysis; pyruvate from D-glyceraldehyde 3-phosphate: step 3/5. In terms of biological role, catalyzes the interconversion of 2-phosphoglycerate and 3-phosphoglycerate. The chain is 2,3-bisphosphoglycerate-independent phosphoglycerate mutase from Geobacillus thermodenitrificans (strain NG80-2).